Reading from the N-terminus, the 551-residue chain is Colicin E3 (551 aa).

Disordered regions lie at residues Met1 to Gly74, Thr243 to Asp269, and Pro293 to Glu320. The interval Met1–Pro315 is translocation (T) domain. The span at Ile20–Asp35 shows a compositional bias: gly residues. The short motif at Asp35 to Trp39 is the Binds to TolB element. Low complexity predominate over residues Gly36–Pro45. Gly residues predominate over residues Trp46–Gly74. Residues Val296–Glu320 are compositionally biased toward basic and acidic residues. The stretch at Val316–Phe378 forms a coiled coil. The tract at residues Val316–Lys450 is receptor-binding (R) domain. The Hairpin signature appears at Ala379–Gly385. The stretch at Gly386–Lys450 forms a coiled coil. A disordered region spans residues Asn406 to Lys505. The span at Glu430–Asn472 shows a compositional bias: basic and acidic residues. Residues Asn451–Gly456 are linker. Residues Lys455–Leu551 are ribosome inactivating activity. Residues Phe457 to Leu551 form a cytotoxic RNase (C) domain region. His513 serves as the catalytic Proton donor. The Proton acceptor role is filled by Glu517. The disordered stretch occupies residues Glu517 to Leu551. The segment at Phe530–Leu551 is binding of immunity protein. Arg545 is a catalytic residue.

Belongs to the cloacin colicin family. Native colicin E3 is a 1:1 complex of A chain and protein B (cognate immunity protein, Im3); protein A is 1,000-fold more active in inactivating ribosomes than the native complex. The cytotoxic fragment (residues 456-551, C95) forms a 1:1 complex with Im3. The receptor-binding (R) domain binds obliquely to its receptor BtuB without displacing BtuB's central plug; binding unfolds the R domain. The N-terminal 83 residues (T83) bind OmpF; trimeric complexes with colicin E3, BtuB and OmpF can be cross-linked and immunoprecipitated. Probably inserts into the OmpF pore as an unfolded peptide and spans the OmpF pore. In a complex with T.thermophilus 70S ribosomes, cytotoxic fragment C96 contacts 16S rRNA, 23S rRNA, mRNA, P-site tRNA and ribosomal protein uS12.

The protein localises to the secreted. In terms of biological role, colicins are polypeptide toxins produced by and active against E.coli and closely related bacteria. Cleaves 16S rRNA between adenosine-1492 and guanosine-1493 (E.coli 16S rRNA numbering), releasing a 49 nucleotide (nt) 'colicin' fragment. Inactivates 70S ribosomes or 30S subunits by endonucleolytically cleaving 16S RNA at a specific site about 50 nt from its C-terminus. Produces 5'-OH-guanosine and a 2',3'-cyclic phosphate adenosine. Mixing a susceptible (e.g. strain K12 / A19) and colicin E3 producing strain results in total protein translation inhibition within 11 minutes. Its activity is inhibited by cognate immunity protein Im3. Uses BtuB, the vitamin B transporter, as a receptor on the outer membrane; binds via the receptor (R) domain. Then the translocation domain (T) probably 'fishes' for its outer membrane translocon protein, OmpF. The N-terminal 83 residues (T83) can bind to and occlude OmpF channels. A complex of the cytotoxic C-terminal 96 residues (C96) plus the immunity protein does not occlude OmpF; upon complex separation from the immunity protein C96 becomes disordered and is able to bind OmpF. The N-terminus probably binds TolB and then reinserts into an empty pore of trimeric OmpF; the rest of the protein is pulled through OmpF and crosses the inner membrane, where the cytotoxic fragment is probably released by protease FtsH. This is Colicin E3 (ceaC) from Escherichia coli.